The following is a 408-amino-acid chain: Homogentisate geranylgeranyltransferase (408 aa).

A chloroplast-targeting transit peptide spans 1–68; the sequence is MQATTAAAAA…SAISQATSPR (68 aa). The next 9 membrane-spanning stretches (helical) occupy residues 122–142, 149–169, 194–214, 217–237, 248–268, 286–306, 329–349, 352–372, and 386–406; these read HTIFGTIIGITSVSLLPMKSI, VLKGYLEALAAALCMNIYVVG, SVATGVFLVVTFLIMSFSIGI, GSVPLMYALVVSFLLGSAYSI, ALLAASCILFVRAILVQLAFF, LVFATLFMCCFSAVIALFKDI, VYQLCISILLTAYLAATVVGA, THLLQKIITVSGHGLLALTLW, and VTSFYMFIWKLFYAEYFLIPF.

This sequence belongs to the UbiA prenyltransferase family.

The protein resides in the plastid. It is found in the chloroplast membrane. The enzyme catalyses homogentisate + (2E,6E,10E)-geranylgeranyl diphosphate + H(+) = 6-geranylgeranyl-2-methylbenzene-1,4-diol + CO2 + diphosphate. Its pathway is cofactor biosynthesis; tocopherol biosynthesis. Involved in the synthesis of tocotrienol (vitamin E). Catalyzes the condensation of homogentisate and geranylgeranyl diphosphate to form 2-methyl-6-geranylgeranylbenzoquinol. Possesses low activity with phytyl diphosphate as substrate. The chain is Homogentisate geranylgeranyltransferase from Triticum aestivum (Wheat).